Here is a 96-residue protein sequence, read N- to C-terminus: Co-chaperonin GroES (96 aa).

Belongs to the GroES chaperonin family. Heptamer of 7 subunits arranged in a ring. Interacts with the chaperonin GroEL.

It localises to the cytoplasm. Functionally, together with the chaperonin GroEL, plays an essential role in assisting protein folding. The GroEL-GroES system forms a nano-cage that allows encapsulation of the non-native substrate proteins and provides a physical environment optimized to promote and accelerate protein folding. GroES binds to the apical surface of the GroEL ring, thereby capping the opening of the GroEL channel. The polypeptide is Co-chaperonin GroES (Legionella micdadei (Tatlockia micdadei)).